The following is a 353-amino-acid chain: MTATLERRESASIWGRFCNWVTSTETRLYIGWFGVLMIPTLLTATSVFIIAFIAAPPVDIDGIREPVSGSLLYGNNIISGAIIPTSAAIGLHFYPIWEAASVDEWLYNGGPYELIVLHFLLGVACYMGREWELSYRLGMRPWIAVAYSAPVAAATAVFLIYPIGQGSFSDGMPLGISGTFNFMIVFQAEHNILMHPFHMLGVAGVFGGSLFSAMHGSLVTSSLIRETTENESANAGYKFGQEEETYNIVAAHGYFGRLIFQYASFNNSRSLHFFLAAWPVVGIWFTALGISTMAFNLNGFNFNQSVVDSQGRVINTWADIINRANPGMEVMHERNAHNFPPNLAAIEAPAVNG.

Thr-2 bears the N-acetylthreonine mark. Phosphothreonine is present on Thr-2. The next 3 helical transmembrane spans lie at 29–46 (YIGWFGVLMIPTLLTATS), 118–133 (HFLLGVACYMGREWEL), and 142–156 (WIAVAYSAPVAAATA). A chlorophyll a-binding site is contributed by His-118. Residue Tyr-126 coordinates pheophytin a. [CaMn4O5] cluster-binding residues include Asp-170 and Glu-189. The helical transmembrane segment at 197-218 (FHMLGVAGVFGGSLFSAMHGSL) threads the bilayer. Residue His-198 participates in chlorophyll a binding. Residues His-215 and 264–265 (SF) contribute to the a quinone site. His-215 is a binding site for Fe cation. Position 272 (His-272) interacts with Fe cation. Residues 274–288 (FLAAWPVVGIWFTAL) form a helical membrane-spanning segment. The [CaMn4O5] cluster site is built by His-332, Glu-333, and Ala-344. Positions 345–353 (AIEAPAVNG) are excised as a propeptide.

Belongs to the reaction center PufL/M/PsbA/D family. As to quaternary structure, PSII is composed of 1 copy each of membrane proteins PsbA, PsbB, PsbC, PsbD, PsbE, PsbF, PsbH, PsbI, PsbJ, PsbK, PsbL, PsbM, PsbT, PsbX, PsbY, PsbZ, Psb30/Ycf12, at least 3 peripheral proteins of the oxygen-evolving complex and a large number of cofactors. It forms dimeric complexes. The cofactor is The D1/D2 heterodimer binds P680, chlorophylls that are the primary electron donor of PSII, and subsequent electron acceptors. It shares a non-heme iron and each subunit binds pheophytin, quinone, additional chlorophylls, carotenoids and lipids. D1 provides most of the ligands for the Mn4-Ca-O5 cluster of the oxygen-evolving complex (OEC). There is also a Cl(-1) ion associated with D1 and D2, which is required for oxygen evolution. The PSII complex binds additional chlorophylls, carotenoids and specific lipids.. Tyr-161 forms a radical intermediate that is referred to as redox-active TyrZ, YZ or Y-Z. Post-translationally, C-terminally processed by CTPA; processing is essential to allow assembly of the oxygen-evolving complex and thus photosynthetic growth.

It localises to the plastid. Its subcellular location is the chloroplast thylakoid membrane. It catalyses the reaction 2 a plastoquinone + 4 hnu + 2 H2O = 2 a plastoquinol + O2. In terms of biological role, photosystem II (PSII) is a light-driven water:plastoquinone oxidoreductase that uses light energy to abstract electrons from H(2)O, generating O(2) and a proton gradient subsequently used for ATP formation. It consists of a core antenna complex that captures photons, and an electron transfer chain that converts photonic excitation into a charge separation. The D1/D2 (PsbA/PsbD) reaction center heterodimer binds P680, the primary electron donor of PSII as well as several subsequent electron acceptors. This chain is Photosystem II protein D1, found in Conocephalum japonicum (Liverwort).